The sequence spans 158 residues: MSKVVDLVRPVVETIIDEHGDMLVDMEYVKEKGQNYLRIYVDRQPNGIDIDEIAALSELVSEKLDTIDPDPLPDPYVLELSSPGAERPIKTEADWKRALNDYVHIGLYQKIDDKKVYEGTLKYYNNDEIVLEVKDKTRRKKLTIPRKLIAKIRFAIEF.

The protein belongs to the RimP family.

The protein resides in the cytoplasm. In terms of biological role, required for maturation of 30S ribosomal subunits. This is Ribosome maturation factor RimP from Lactobacillus helveticus (strain DPC 4571).